The chain runs to 360 residues: Peptide chain release factor 1 (360 aa).

Residue Q235 is modified to N5-methylglutamine. The segment covering 284-293 has biased composition (basic and acidic residues); the sequence is ARRQQEESST. The disordered stretch occupies residues 284 to 314; sequence ARRQQEESSTRRNLLGSGDRSDRNRTYNFPQ.

Belongs to the prokaryotic/mitochondrial release factor family. Post-translationally, methylated by PrmC. Methylation increases the termination efficiency of RF1.

It is found in the cytoplasm. Functionally, peptide chain release factor 1 directs the termination of translation in response to the peptide chain termination codons UAG and UAA. The polypeptide is Peptide chain release factor 1 (Erwinia tasmaniensis (strain DSM 17950 / CFBP 7177 / CIP 109463 / NCPPB 4357 / Et1/99)).